A 460-amino-acid chain; its full sequence is Kynureninase (460 aa).

Pyridoxal 5'-phosphate-binding positions include Leu127, Thr128, 165–168 (FPSD), Asp249, His252, and Tyr274. Lys275 carries the post-translational modification N6-(pyridoxal phosphate)lysine. Pyridoxal 5'-phosphate is bound by residues Trp304 and Asn332.

Belongs to the kynureninase family. Homodimer. The cofactor is pyridoxal 5'-phosphate.

Its subcellular location is the cytoplasm. It carries out the reaction L-kynurenine + H2O = anthranilate + L-alanine + H(+). It catalyses the reaction 3-hydroxy-L-kynurenine + H2O = 3-hydroxyanthranilate + L-alanine + H(+). It functions in the pathway amino-acid degradation; L-kynurenine degradation; L-alanine and anthranilate from L-kynurenine: step 1/1. The protein operates within cofactor biosynthesis; NAD(+) biosynthesis; quinolinate from L-kynurenine: step 2/3. In terms of biological role, catalyzes the cleavage of L-kynurenine (L-Kyn) and L-3-hydroxykynurenine (L-3OHKyn) into anthranilic acid (AA) and 3-hydroxyanthranilic acid (3-OHAA), respectively. The chain is Kynureninase from Monosiga brevicollis (Choanoflagellate).